Consider the following 400-residue polypeptide: E3 ubiquitin-protein ligase RNF149 (400 aa).

Positions 1–32 are cleaved as a signal peptide; it reads MAWRRREASVGARGVLALALLALALCVPGARG. N-linked (GlcNAc...) asparagine glycosylation is found at Asn52 and Asn145. The 109-residue stretch at 67–175 folds into the PA domain; the sequence is SSPKEGAHGL…PKGREILELV (109 aa). Residues 201-221 traverse the membrane as a helical segment; it reads VVFVAIAFITMMIISLAWLIF. The RING-type; atypical zinc-finger motif lies at 269–310; the sequence is CAVCIENFKVKDIIRILPCKHIFHRICIDPWLLDHRTCPMCK. The segment at 325–400 is disordered; it reads DVQEMPAPES…SDSRHGGPIS (76 aa). Ser345 is modified (phosphoserine). Residues 356–368 are compositionally biased toward low complexity; sequence DSSPPSASPAESE. A compositionally biased stretch (basic and acidic residues) spans 389–400; that stretch reads GRSDSRHGGPIS.

It localises to the membrane. The enzyme catalyses S-ubiquitinyl-[E2 ubiquitin-conjugating enzyme]-L-cysteine + [acceptor protein]-L-lysine = [E2 ubiquitin-conjugating enzyme]-L-cysteine + N(6)-ubiquitinyl-[acceptor protein]-L-lysine.. Its pathway is protein modification; protein ubiquitination. In terms of biological role, E3 ubiquitin-protein ligase. Ubiquitinates BRAF, inducing its proteasomal degradation. The protein is E3 ubiquitin-protein ligase RNF149 (RNF149) of Homo sapiens (Human).